A 277-amino-acid chain; its full sequence is NAD kinase (277 aa).

D67 (proton acceptor) is an active-site residue. NAD(+) is bound by residues 67 to 68, R72, 137 to 138, K148, R165, D167, 178 to 183, L202, and Q236; these read DG, NE, and TGYAMS.

It belongs to the NAD kinase family. It depends on a divalent metal cation as a cofactor.

It localises to the cytoplasm. It carries out the reaction NAD(+) + ATP = ADP + NADP(+) + H(+). Its function is as follows. Involved in the regulation of the intracellular balance of NAD and NADP, and is a key enzyme in the biosynthesis of NADP. Catalyzes specifically the phosphorylation on 2'-hydroxyl of the adenosine moiety of NAD to yield NADP. The sequence is that of NAD kinase from Pyrococcus abyssi (strain GE5 / Orsay).